Here is a 163-residue protein sequence, read N- to C-terminus: NADH-quinone oxidoreductase subunit I (163 aa).

4Fe-4S ferredoxin-type domains lie at 53-83 and 94-123; these read LRRYPNGEERCIACKLCEAICPAQAITIEAG and VRYDIDMVKCIYCGFCQEACPVDAIVEGPN. Residues cysteine 63, cysteine 66, cysteine 69, cysteine 73, cysteine 103, cysteine 106, cysteine 109, and cysteine 113 each contribute to the [4Fe-4S] cluster site.

The protein belongs to the complex I 23 kDa subunit family. As to quaternary structure, NDH-1 is composed of 14 different subunits. Subunits NuoA, H, J, K, L, M, N constitute the membrane sector of the complex. [4Fe-4S] cluster is required as a cofactor.

It is found in the cell inner membrane. It catalyses the reaction a quinone + NADH + 5 H(+)(in) = a quinol + NAD(+) + 4 H(+)(out). Functionally, NDH-1 shuttles electrons from NADH, via FMN and iron-sulfur (Fe-S) centers, to quinones in the respiratory chain. The immediate electron acceptor for the enzyme in this species is believed to be ubiquinone. Couples the redox reaction to proton translocation (for every two electrons transferred, four hydrogen ions are translocated across the cytoplasmic membrane), and thus conserves the redox energy in a proton gradient. In Brucella abortus (strain S19), this protein is NADH-quinone oxidoreductase subunit I.